The primary structure comprises 326 residues: NADH-quinone oxidoreductase subunit H (326 aa).

Helical transmembrane passes span 11-31 (ILLS…CGAF), 81-101 (VIFT…FAIV), 114-134 (IGIL…LFAG), 154-174 (LSYE…AGSF), 186-206 (LWNV…GVAV), 237-257 (FFVG…TLFF), 265-285 (LPPF…FILI), and 302-322 (WKVC…VILW).

The protein belongs to the complex I subunit 1 family. As to quaternary structure, NDH-1 is composed of 13 different subunits. Subunits NuoA, H, J, K, L, M, N constitute the membrane sector of the complex.

The protein resides in the cell inner membrane. The catalysed reaction is a quinone + NADH + 5 H(+)(in) = a quinol + NAD(+) + 4 H(+)(out). In terms of biological role, NDH-1 shuttles electrons from NADH, via FMN and iron-sulfur (Fe-S) centers, to quinones in the respiratory chain. The immediate electron acceptor for the enzyme in this species is believed to be ubiquinone. Couples the redox reaction to proton translocation (for every two electrons transferred, four hydrogen ions are translocated across the cytoplasmic membrane), and thus conserves the redox energy in a proton gradient. This subunit may bind ubiquinone. This Cronobacter sakazakii (strain ATCC BAA-894) (Enterobacter sakazakii) protein is NADH-quinone oxidoreductase subunit H.